Consider the following 281-residue polypeptide: Protoheme IX farnesyltransferase (281 aa).

Transmembrane regions (helical) follow at residues 16 to 36, 38 to 58, 75 to 95, 101 to 121, 129 to 149, 150 to 170, 202 to 224, 228 to 250, and 261 to 281; these read TFLLMITFLVSYIVARGGADF, FVIAAISMFLAISGTTAINMW, VPAGILKPSECAAFGAAIFAI, FLVSLEFGLVVFFGLFFDIVV, KSPYSIVLGGFAGAMPALGGW, VAVQGFTLPGFIIAAIVLLWI, ASWAIVFATAAMLVLAASLYVLL, IFYLVISTSAVAFFLYKAVKFAL, and YKLASMTLGLVYFSLLLGVFL.

This sequence belongs to the UbiA prenyltransferase family. Protoheme IX farnesyltransferase subfamily.

It localises to the cell membrane. The catalysed reaction is heme b + (2E,6E)-farnesyl diphosphate + H2O = Fe(II)-heme o + diphosphate. It functions in the pathway porphyrin-containing compound metabolism; heme O biosynthesis; heme O from protoheme: step 1/1. Functionally, converts heme B (protoheme IX) to heme O by substitution of the vinyl group on carbon 2 of heme B porphyrin ring with a hydroxyethyl farnesyl side group. This Archaeoglobus fulgidus (strain ATCC 49558 / DSM 4304 / JCM 9628 / NBRC 100126 / VC-16) protein is Protoheme IX farnesyltransferase.